A 564-amino-acid polypeptide reads, in one-letter code: Septation ring formation regulator EzrA (564 aa).

Residues Met1–Phe4 lie on the Extracellular side of the membrane. The helical transmembrane segment at Ile5–Met23 threads the bilayer. The Cytoplasmic portion of the chain corresponds to Arg24–Glu564. 4 coiled-coil regions span residues Val84–Thr126, Glu165–Glu223, Met271–Lys303, and Val350–Leu435.

It belongs to the EzrA family.

The protein localises to the cell membrane. In terms of biological role, negative regulator of FtsZ ring formation; modulates the frequency and position of FtsZ ring formation. Inhibits FtsZ ring formation at polar sites. Interacts either with FtsZ or with one of its binding partners to promote depolymerization. This Staphylococcus epidermidis (strain ATCC 12228 / FDA PCI 1200) protein is Septation ring formation regulator EzrA.